The chain runs to 310 residues: MTNTIYNKNIISISDLSRSELELIVATANELKQNPRPELLKNKVVASCFFEASTRTRLSFETAVQRLGGSIIGFPDGGNTSLGKKGETLADSVQVISSYCDAFFIRHNQEGAARLASEFSSVPVINGGDGSNQHPTQTLLDLFSIYETQGTLEKLQVAFVGDLKYGRTVHSLTQALSLFDCEFHFVAPKALLMPDYIIDELKEKGCKYTLHETLDEIMDSLDILYMTRVQKERFDETEYQHLKSSFILTANMLKGVKDNLKILHPLPRVDEITTDVDSTPYAYYFQQAKNGVYARQALLTLVLTNEFGDL.

Positions 55 and 56 each coordinate carbamoyl phosphate. An L-aspartate-binding site is contributed by Lys85. Carbamoyl phosphate contacts are provided by Arg106, His134, and Gln137. Residues Arg167 and Arg228 each contribute to the L-aspartate site. Leu266 and Pro267 together coordinate carbamoyl phosphate.

The protein belongs to the aspartate/ornithine carbamoyltransferase superfamily. ATCase family. As to quaternary structure, heterododecamer (2C3:3R2) of six catalytic PyrB chains organized as two trimers (C3), and six regulatory PyrI chains organized as three dimers (R2).

It catalyses the reaction carbamoyl phosphate + L-aspartate = N-carbamoyl-L-aspartate + phosphate + H(+). Its pathway is pyrimidine metabolism; UMP biosynthesis via de novo pathway; (S)-dihydroorotate from bicarbonate: step 2/3. Catalyzes the condensation of carbamoyl phosphate and aspartate to form carbamoyl aspartate and inorganic phosphate, the committed step in the de novo pyrimidine nucleotide biosynthesis pathway. The protein is Aspartate carbamoyltransferase catalytic subunit 2 of Shewanella halifaxensis (strain HAW-EB4).